Reading from the N-terminus, the 192-residue chain is NF-kappa-B inhibitor-interacting Ras-like protein 1 (192 aa).

GTP is bound at residue 11 to 18; sequence GLLSVGKT. An Effector region motif is present at residues 35 to 43; it reads DCETMEDVY. The interval 58–93 is interactions with NFKBIA and NFKBIB; that stretch reads HLYDTRGLQEGVELPKHYFSFADGFVLVYSVNNLES. Residues 61–65 and 120–123 contribute to the GTP site; these read DTRGL and NKID. Positions 168-192 are disordered; the sequence is LSQPQSKSSFPLPGRKNKGNSSSEN.

The protein belongs to the small GTPase superfamily. Ras family. KappaB-Ras subfamily. As to quaternary structure, interacts with both NF-kappa-B inhibitor alpha (NFKBIA) and beta (NFKBIB) in vitro. However, it probably only interacts with NFKBIB in vivo. Forms a complex with NFKBIB and NF-kappa-B heterodimer (p50/NFKB1 and p65/RELA). Also interacts with c-Rel (REL).

Its subcellular location is the cytoplasm. Its function is as follows. Atypical Ras-like protein that acts as a potent regulator of NF-kappa-B activity by preventing the degradation of NF-kappa-B inhibitor beta (NFKBIB) by most signals, explaining why NFKBIB is more resistant to degradation. May act by blocking phosphorylation of NFKBIB and mediating cytoplasmic retention of p65/RELA NF-kappa-B subunit. It is unclear whether it acts as a GTPase. Both GTP- and GDP-bound forms block phosphorylation of NFKBIB. The sequence is that of NF-kappa-B inhibitor-interacting Ras-like protein 1 (NKIRAS1) from Macaca fascicularis (Crab-eating macaque).